The following is a 1220-amino-acid chain: ATP-dependent helicase/nuclease subunit A (1220 aa).

In terms of domain architecture, UvrD-like helicase ATP-binding spans 9 to 473; that stretch reads VIWTDDQWKS…IDLSQNFRSR (465 aa). ATP is bound at residue 30–37; the sequence is AAAGSGKT. One can recognise a UvrD-like helicase C-terminal domain in the interval 474-782; that stretch reads PEVLSTTNYL…RMMTIHASKG (309 aa).

The protein belongs to the helicase family. AddA subfamily. Heterodimer of AddA and AddB/RexB. Mg(2+) is required as a cofactor.

It carries out the reaction Couples ATP hydrolysis with the unwinding of duplex DNA by translocating in the 3'-5' direction.. The enzyme catalyses ATP + H2O = ADP + phosphate + H(+). The heterodimer acts as both an ATP-dependent DNA helicase and an ATP-dependent, dual-direction single-stranded exonuclease. Recognizes the chi site generating a DNA molecule suitable for the initiation of homologous recombination. The AddA nuclease domain is required for chi fragment generation; this subunit has the helicase and 3' -&gt; 5' nuclease activities. This Staphylococcus carnosus (strain TM300) protein is ATP-dependent helicase/nuclease subunit A.